A 323-amino-acid polypeptide reads, in one-letter code: MSRLLRVYVDGPHGLGKTTAASALASERGDAIYLPEPMSYWSGAGEDDLVARVYTAQHRMDRGEIDAREAAGVVLGAQLTMSTPYVALNGLIAPHIGEEPSPGNATPPDLILIFDRHPIASLLCYPLARYLTRCLPIESVLSLIALIPPTPPGTNLILGTAPAEDHLSRLVARGRPGELPDARMLRAIRYVYALLANTVKYLQSGGSWRADLGSEPPRLPLAPPEIGDPNNPGGHNTLLALIHGAGATRGCAAMTSWTLDLLADRLRSMNMFTVDYSAPPEACVAQMRNLLPSMQCTVTPKPESHRAVADAALAFMREMSNCK.

11-18 contacts ATP; it reads GPHGLGKT. Glutamate 36 acts as the Proton acceptor in catalysis. Tyrosine 54 and glutamine 78 together coordinate substrate. ATP is bound at residue arginine 169. Residue arginine 175 participates in substrate binding.

The protein belongs to the herpesviridae thymidine kinase family. As to quaternary structure, homodimer.

It carries out the reaction thymidine + ATP = dTMP + ADP + H(+). Functionally, catalyzes the transfer of the gamma-phospho group of ATP to thymidine to generate dTMP in the salvage pathway of pyrimidine synthesis. The dTMP serves as a substrate for DNA polymerase during viral DNA replication. Allows the virus to be reactivated and to grow in non-proliferative cells lacking a high concentration of phosphorylated nucleic acid precursors. The chain is Thymidine kinase from Bos taurus (Bovine).